The sequence spans 198 residues: Glycerol-3-phosphate acyltransferase 1 (198 aa).

A run of 5 helical transmembrane segments spans residues 5–25, 52–72, 81–101, 111–131, and 138–158; these read ALLA…AWLA, GPAL…VLLA, WAAL…FLAF, FGVI…LAIA, and FVSA…LVLP.

This sequence belongs to the PlsY family. Probably interacts with PlsX.

The protein resides in the cell membrane. The enzyme catalyses an acyl phosphate + sn-glycerol 3-phosphate = a 1-acyl-sn-glycero-3-phosphate + phosphate. The protein operates within lipid metabolism; phospholipid metabolism. In terms of biological role, catalyzes the transfer of an acyl group from acyl-phosphate (acyl-PO(4)) to glycerol-3-phosphate (G3P) to form lysophosphatidic acid (LPA). This enzyme utilizes acyl-phosphate as fatty acyl donor, but not acyl-CoA or acyl-ACP. The polypeptide is Glycerol-3-phosphate acyltransferase 1 (Deinococcus radiodurans (strain ATCC 13939 / DSM 20539 / JCM 16871 / CCUG 27074 / LMG 4051 / NBRC 15346 / NCIMB 9279 / VKM B-1422 / R1)).